Reading from the N-terminus, the 453-residue chain is Bifunctional protein GlmU (453 aa).

The tract at residues 1–225 (MNIVILAAGT…EWETLGVNSK (225 aa)) is pyrophosphorylase. UDP-N-acetyl-alpha-D-glucosamine contacts are provided by residues 6–9 (LAAG), Lys-20, Gln-71, 76–77 (GT), 98–100 (YGD), Gly-135, Glu-150, Asn-165, and Asn-223. Residue Asp-100 coordinates Mg(2+). Asn-223 is a Mg(2+) binding site. The tract at residues 226–246 (AQLAELERIHQRKLAEALLAD) is linker. The tract at residues 247–453 (GVTLADPARI…GYVRPVKKKS (207 aa)) is N-acetyltransferase. Positions 329 and 347 each coordinate UDP-N-acetyl-alpha-D-glucosamine. His-359 acts as the Proton acceptor in catalysis. UDP-N-acetyl-alpha-D-glucosamine is bound by residues Tyr-362 and Asn-373. Acetyl-CoA-binding positions include Ala-376, 382-383 (NY), Ser-401, and Ala-419.

The protein in the N-terminal section; belongs to the N-acetylglucosamine-1-phosphate uridyltransferase family. In the C-terminal section; belongs to the transferase hexapeptide repeat family. As to quaternary structure, homotrimer. It depends on Mg(2+) as a cofactor.

It localises to the cytoplasm. It catalyses the reaction alpha-D-glucosamine 1-phosphate + acetyl-CoA = N-acetyl-alpha-D-glucosamine 1-phosphate + CoA + H(+). The enzyme catalyses N-acetyl-alpha-D-glucosamine 1-phosphate + UTP + H(+) = UDP-N-acetyl-alpha-D-glucosamine + diphosphate. The protein operates within nucleotide-sugar biosynthesis; UDP-N-acetyl-alpha-D-glucosamine biosynthesis; N-acetyl-alpha-D-glucosamine 1-phosphate from alpha-D-glucosamine 6-phosphate (route II): step 2/2. Its pathway is nucleotide-sugar biosynthesis; UDP-N-acetyl-alpha-D-glucosamine biosynthesis; UDP-N-acetyl-alpha-D-glucosamine from N-acetyl-alpha-D-glucosamine 1-phosphate: step 1/1. It functions in the pathway bacterial outer membrane biogenesis; LPS lipid A biosynthesis. Its function is as follows. Catalyzes the last two sequential reactions in the de novo biosynthetic pathway for UDP-N-acetylglucosamine (UDP-GlcNAc). The C-terminal domain catalyzes the transfer of acetyl group from acetyl coenzyme A to glucosamine-1-phosphate (GlcN-1-P) to produce N-acetylglucosamine-1-phosphate (GlcNAc-1-P), which is converted into UDP-GlcNAc by the transfer of uridine 5-monophosphate (from uridine 5-triphosphate), a reaction catalyzed by the N-terminal domain. The protein is Bifunctional protein GlmU of Burkholderia thailandensis (strain ATCC 700388 / DSM 13276 / CCUG 48851 / CIP 106301 / E264).